Reading from the N-terminus, the 290-residue chain is tRNA (adenine(58)-N(1))-methyltransferase catalytic subunit TRMT61A (290 aa).

Serine 2 carries the post-translational modification N-acetylserine. Substrate regions lie at residues leucine 20–histidine 22, glutamine 35–valine 42, glycine 64–tryptophan 65, glutamine 85–serine 89, and serine 110–valine 117. S-adenosyl-L-methionine contacts are provided by residues leucine 87, serine 114–serine 116, glutamate 135, arginine 140, aspartate 163–valine 164, and aspartate 181. Substrate regions lie at residues leucine 180–proline 183 and serine 205–glutamine 212. At serine 264 the chain carries Phosphoserine. Threonine 279 is a substrate binding site.

It belongs to the class I-like SAM-binding methyltransferase superfamily. TRM61 family. Heterotetramer; composed of two copies of TRMT6 and two copies of TRMT61A.

It localises to the nucleus. It catalyses the reaction adenosine(58) in tRNA + S-adenosyl-L-methionine = N(1)-methyladenosine(58) in tRNA + S-adenosyl-L-homocysteine + H(+). It carries out the reaction an adenosine in mRNA + S-adenosyl-L-methionine = an N(1)-methyladenosine in mRNA + S-adenosyl-L-homocysteine + H(+). Its function is as follows. Catalytic subunit of tRNA (adenine-N(1)-)-methyltransferase, which catalyzes the formation of N(1)-methyladenine at position 58 (m1A58) in initiator methionyl-tRNA. Catalytic subunit of mRNA N(1)-methyltransferase complex, which mediates methylation of adenosine residues at the N(1) position of a small subset of mRNAs: N(1) methylation takes place in tRNA T-loop-like structures of mRNAs and is only present at low stoichiometries. This chain is tRNA (adenine(58)-N(1))-methyltransferase catalytic subunit TRMT61A (Trmt61a), found in Mus musculus (Mouse).